We begin with the raw amino-acid sequence, 408 residues long: Dicamba O-demethylase 1, ferredoxin reductase component (408 aa).

6 residues coordinate FAD: Gly14, Lys49, Val82, Arg130, Asp279, and Val298.

Belongs to the FAD-dependent oxidoreductase family. In terms of assembly, monomer. The dicamba O-demethylase multicomponent enzyme system is composed of an oxygenase component (DdmC) and an electron transfer component formed by a ferredoxin reductase (DdmA1) and a ferredoxin (DdmB). In vitro, dicamba O-demethylase assays in which DdmA2 is substituted for DdmA1 demonstrate that the two enzymes possess nearly identical activities. Requires FAD as cofactor.

It catalyses the reaction 2 reduced [2Fe-2S]-[ferredoxin] + NAD(+) + H(+) = 2 oxidized [2Fe-2S]-[ferredoxin] + NADH. Functionally, component of the dicamba O-demethylase multicomponent enzyme system involved in the degradation of the herbicide dicamba. In vitro, catalyzes the transfers of electrons from ferredoxin (DdmB) to NADH. Both NADH and NADPH support enzyme activity, with NADH being markedly more effective than NADPH. The sequence is that of Dicamba O-demethylase 1, ferredoxin reductase component from Stenotrophomonas maltophilia (Pseudomonas maltophilia).